A 194-amino-acid chain; its full sequence is Thymidine kinase (194 aa).

Residues 15-22 (GPMFSGKS) and 89-92 (DEAH) contribute to the ATP site. Glutamate 90 acts as the Proton acceptor in catalysis. Zn(2+)-binding residues include cysteine 146, cysteine 149, cysteine 178, and cysteine 181.

This sequence belongs to the thymidine kinase family. As to quaternary structure, homotetramer.

The protein resides in the cytoplasm. It carries out the reaction thymidine + ATP = dTMP + ADP + H(+). The sequence is that of Thymidine kinase from Metamycoplasma arthritidis (strain 158L3-1) (Mycoplasma arthritidis).